Consider the following 428-residue polypeptide: C4-dicarboxylate transport protein (428 aa).

The next 9 helical transmembrane spans lie at 8–28 (SLYV…HFYP), 44–64 (LIKM…IAGM), 76–96 (VALL…LIIV), 142–162 (IGAF…LFGF), 184–204 (VIFG…FGAM), 222–242 (LIIC…GSIA), 289–309 (VVGL…SIYL), 326–346 (IFHQ…AAGV), and 352–372 (IVLA…LALI).

The protein belongs to the dicarboxylate/amino acid:cation symporter (DAACS) (TC 2.A.23) family.

It localises to the cell inner membrane. Its function is as follows. Responsible for the transport of dicarboxylates such as succinate, fumarate, and malate from the periplasm across the membrane. The sequence is that of C4-dicarboxylate transport protein from Klebsiella pneumoniae subsp. pneumoniae (strain ATCC 700721 / MGH 78578).